A 224-amino-acid chain; its full sequence is MTALTPPQHEAELLQRAKSIAGLTFAELAEELNLVVPPDLKRDKGWVGMLIETALGATAGSKAEQDFSHLGIELKTIPVNQQGYPLETTFVSLAPLAQNSGVTWHSSHVRYKLSKVLWIPIEGERQIPLAERHVGVPILWQPSSSQEQRLRQDWEELMDYIVLGKLTEITARIGEVLQLRPKGANSRALTKGIGKNGEIIDTLPLGFYLRKEFTAEILHDFLMD.

This sequence belongs to the MutH family.

It localises to the cytoplasm. Functionally, sequence-specific endonuclease that cleaves unmethylated GATC sequences. It is involved in DNA mismatch repair. The protein is DNA mismatch repair protein MutH of Histophilus somni (strain 2336) (Haemophilus somnus).